Here is a 240-residue protein sequence, read N- to C-terminus: Ribosomal RNA small subunit methyltransferase G (240 aa).

Residues G79, F84, 130–131, and R149 each bind S-adenosyl-L-methionine; that span reads AE.

This sequence belongs to the methyltransferase superfamily. RNA methyltransferase RsmG family.

The protein localises to the cytoplasm. In terms of biological role, specifically methylates the N7 position of a guanine in 16S rRNA. In Lactobacillus helveticus (strain DPC 4571), this protein is Ribosomal RNA small subunit methyltransferase G.